A 280-amino-acid chain; its full sequence is Proteasome subunit beta 2 (280 aa).

The propeptide at 1–52 (MTERERGQGLPAEFFAVGTASFVELLSRTAPQLLPVNRVRDGSHPMPDIPHG) is removed in mature form; by autocatalysis. Residue Thr-53 is the Nucleophile of the active site.

This sequence belongs to the peptidase T1B family. As to quaternary structure, the 20S proteasome core is composed of 14 alpha and 14 beta subunits that assemble into four stacked heptameric rings, resulting in a barrel-shaped structure. The two inner rings, each composed of seven catalytic beta subunits, are sandwiched by two outer rings, each composed of seven alpha subunits. The catalytic chamber with the active sites is on the inside of the barrel. Has a gated structure, the ends of the cylinder being occluded by the N-termini of the alpha-subunits. Is capped by the proteasome-associated ATPase, ARC.

The protein localises to the cytoplasm. It catalyses the reaction Cleavage of peptide bonds with very broad specificity.. It participates in protein degradation; proteasomal Pup-dependent pathway. Its activity is regulated as follows. The formation of the proteasomal ATPase ARC-20S proteasome complex, likely via the docking of the C-termini of ARC into the intersubunit pockets in the alpha-rings, may trigger opening of the gate for substrate entry. Interconversion between the open-gate and close-gate conformations leads to a dynamic regulation of the 20S proteasome proteolysis activity. Its function is as follows. Component of the proteasome core, a large protease complex with broad specificity involved in protein degradation. The protein is Proteasome subunit beta 2 of Thermomonospora curvata (strain ATCC 19995 / DSM 43183 / JCM 3096 / KCTC 9072 / NBRC 15933 / NCIMB 10081 / Henssen B9).